We begin with the raw amino-acid sequence, 255 residues long: NAD kinase (255 aa).

Catalysis depends on Asp-44, which acts as the Proton acceptor. NAD(+)-binding positions include 44–45 (DG), His-49, 114–115 (NE), Asp-144, Ala-152, 155–160 (SAYNLS), and Gln-216.

It belongs to the NAD kinase family. The cofactor is a divalent metal cation.

The protein resides in the cytoplasm. The catalysed reaction is NAD(+) + ATP = ADP + NADP(+) + H(+). Functionally, involved in the regulation of the intracellular balance of NAD and NADP, and is a key enzyme in the biosynthesis of NADP. Catalyzes specifically the phosphorylation on 2'-hydroxyl of the adenosine moiety of NAD to yield NADP. The polypeptide is NAD kinase (Rickettsia africae (strain ESF-5)).